We begin with the raw amino-acid sequence, 438 residues long: GDP-mannose 6-dehydrogenase (438 aa).

Residues tyrosine 10, valine 11, aspartate 30, lysine 35, threonine 86, and threonine 124 each coordinate NAD(+). GDP-alpha-D-mannuronate contacts are provided by glutamate 161, lysine 210, asparagine 214, histidine 217, asparagine 225, tyrosine 256, tyrosine 257, arginine 259, phenylalanine 262, and glycine 265. Cysteine 268 is a catalytic residue. Lysine 271 contacts NAD(+). Lysine 324 contributes to the GDP-alpha-D-mannuronate binding site. Arginine 331 is an NAD(+) binding site.

This sequence belongs to the UDP-glucose/GDP-mannose dehydrogenase family.

The enzyme catalyses GDP-alpha-D-mannose + 2 NAD(+) + H2O = GDP-alpha-D-mannuronate + 2 NADH + 3 H(+). It participates in glycan biosynthesis; alginate biosynthesis. In terms of biological role, catalyzes the oxidation of guanosine diphospho-D-mannose (GDP-D-mannose) to GDP-D-mannuronic acid, a precursor for alginate polymerization. The alginate layer causes a mucoid phenotype and provides a protective barrier against host immune defenses and antibiotics. The chain is GDP-mannose 6-dehydrogenase (algD) from Pseudomonas syringae pv. tomato (strain ATCC BAA-871 / DC3000).